A 212-amino-acid chain; its full sequence is Imidazole glycerol phosphate synthase subunit HisH (212 aa).

Residues 3 to 212 form the Glutamine amidotransferase type-1 domain; sequence TVAVIDYGMG…QNFIAWDGRW (210 aa). The active-site Nucleophile is C81. Active-site residues include H190 and E192.

In terms of assembly, heterodimer of HisH and HisF.

It is found in the cytoplasm. The catalysed reaction is 5-[(5-phospho-1-deoxy-D-ribulos-1-ylimino)methylamino]-1-(5-phospho-beta-D-ribosyl)imidazole-4-carboxamide + L-glutamine = D-erythro-1-(imidazol-4-yl)glycerol 3-phosphate + 5-amino-1-(5-phospho-beta-D-ribosyl)imidazole-4-carboxamide + L-glutamate + H(+). It carries out the reaction L-glutamine + H2O = L-glutamate + NH4(+). The protein operates within amino-acid biosynthesis; L-histidine biosynthesis; L-histidine from 5-phospho-alpha-D-ribose 1-diphosphate: step 5/9. In terms of biological role, IGPS catalyzes the conversion of PRFAR and glutamine to IGP, AICAR and glutamate. The HisH subunit catalyzes the hydrolysis of glutamine to glutamate and ammonia as part of the synthesis of IGP and AICAR. The resulting ammonia molecule is channeled to the active site of HisF. This is Imidazole glycerol phosphate synthase subunit HisH from Pseudomonas putida (strain ATCC 47054 / DSM 6125 / CFBP 8728 / NCIMB 11950 / KT2440).